A 172-amino-acid polypeptide reads, in one-letter code: 3-hydroxydecanoyl-[acyl-carrier-protein] dehydratase (172 aa).

Residue His-71 is part of the active site.

Belongs to the thioester dehydratase family. FabA subfamily. Homodimer.

The protein resides in the cytoplasm. The catalysed reaction is a (3R)-hydroxyacyl-[ACP] = a (2E)-enoyl-[ACP] + H2O. It carries out the reaction (3R)-hydroxydecanoyl-[ACP] = (2E)-decenoyl-[ACP] + H2O. The enzyme catalyses (2E)-decenoyl-[ACP] = (3Z)-decenoyl-[ACP]. It participates in lipid metabolism; fatty acid biosynthesis. In terms of biological role, necessary for the introduction of cis unsaturation into fatty acids. Catalyzes the dehydration of (3R)-3-hydroxydecanoyl-ACP to E-(2)-decenoyl-ACP and then its isomerization to Z-(3)-decenoyl-ACP. Can catalyze the dehydratase reaction for beta-hydroxyacyl-ACPs with saturated chain lengths up to 16:0, being most active on intermediate chain length. This Aliivibrio salmonicida (strain LFI1238) (Vibrio salmonicida (strain LFI1238)) protein is 3-hydroxydecanoyl-[acyl-carrier-protein] dehydratase.